Reading from the N-terminus, the 184-residue chain is ATP synthase subunit b, chloroplastic (184 aa).

A helical transmembrane segment spans residues 27–49; the sequence is LATNPINLSVVFGVLIFFGKGVL.

The protein belongs to the ATPase B chain family. As to quaternary structure, F-type ATPases have 2 components, F(1) - the catalytic core - and F(0) - the membrane proton channel. F(1) has five subunits: alpha(3), beta(3), gamma(1), delta(1), epsilon(1). F(0) has four main subunits: a(1), b(1), b'(1) and c(10-14). The alpha and beta chains form an alternating ring which encloses part of the gamma chain. F(1) is attached to F(0) by a central stalk formed by the gamma and epsilon chains, while a peripheral stalk is formed by the delta, b and b' chains.

The protein resides in the plastid. Its subcellular location is the chloroplast thylakoid membrane. F(1)F(0) ATP synthase produces ATP from ADP in the presence of a proton or sodium gradient. F-type ATPases consist of two structural domains, F(1) containing the extramembraneous catalytic core and F(0) containing the membrane proton channel, linked together by a central stalk and a peripheral stalk. During catalysis, ATP synthesis in the catalytic domain of F(1) is coupled via a rotary mechanism of the central stalk subunits to proton translocation. Functionally, component of the F(0) channel, it forms part of the peripheral stalk, linking F(1) to F(0). The protein is ATP synthase subunit b, chloroplastic of Olimarabidopsis pumila (Dwarf rocket).